The sequence spans 640 residues: Threonine--tRNA ligase (640 aa).

A TGS domain is found at 1-61; sequence MPTITLPDGS…THDATLQIIT (61 aa). The segment at 242–533 is catalytic; sequence DHRKIGKQLD…LIEHYAGVFP (292 aa). The Zn(2+) site is built by C333, H384, and H510.

Belongs to the class-II aminoacyl-tRNA synthetase family. Homodimer. Zn(2+) serves as cofactor.

It is found in the cytoplasm. The catalysed reaction is tRNA(Thr) + L-threonine + ATP = L-threonyl-tRNA(Thr) + AMP + diphosphate + H(+). Its function is as follows. Catalyzes the attachment of threonine to tRNA(Thr) in a two-step reaction: L-threonine is first activated by ATP to form Thr-AMP and then transferred to the acceptor end of tRNA(Thr). Also edits incorrectly charged L-seryl-tRNA(Thr). The protein is Threonine--tRNA ligase of Pseudomonas putida (strain W619).